Here is a 472-residue protein sequence, read N- to C-terminus: Cysteine--tRNA ligase (472 aa).

A Zn(2+)-binding site is contributed by Cys29. The 'HIGH' region signature appears at 31-41 (PTVYDFAHIGN). Cys227, His252, and Glu256 together coordinate Zn(2+). Positions 285–289 (KMSKS) match the 'KMSKS' region motif. An ATP-binding site is contributed by Lys288.

The protein belongs to the class-I aminoacyl-tRNA synthetase family. As to quaternary structure, monomer. Zn(2+) is required as a cofactor.

The protein localises to the cytoplasm. The enzyme catalyses tRNA(Cys) + L-cysteine + ATP = L-cysteinyl-tRNA(Cys) + AMP + diphosphate. In Bradyrhizobium sp. (strain BTAi1 / ATCC BAA-1182), this protein is Cysteine--tRNA ligase.